A 473-amino-acid chain; its full sequence is Suppressor of SWI4 1 homolog (473 aa).

A Brix domain is found at 29 to 292 (PHSFVFTRGC…LIKVQEGVGE (264 aa)). Phosphoserine is present on residues S238 and S240. A disordered region spans residues 323–473 (AQRQAQQAQN…GRGRPRKRVA (151 aa)). Residues 324 to 334 (QRQAQQAQNVQ) are compositionally biased toward low complexity. Positions 335–360 (RKQEQREAHRKKSLEGMKKARVRGGD) are enriched in basic and acidic residues. Residues 376 to 388 (GEDDDEQEDDDIE) are compositionally biased toward acidic residues. A compositionally biased stretch (basic residues) spans 407–421 (KRKRLAKSPGQKRKR). Positions 422 to 444 (REMDRGRGRLCDQKFPKPKDKSH) are enriched in basic and acidic residues. K438 carries the N6-acetyllysine modification. A compositionally biased stretch (basic residues) spans 464-473 (GRGRPRKRVA).

The protein resides in the nucleus. It localises to the nucleolus. In terms of biological role, may have a role in cell growth. This is Suppressor of SWI4 1 homolog (PPAN) from Pongo abelii (Sumatran orangutan).